The primary structure comprises 447 residues: Elongation factor 1-alpha (447 aa).

Positions 5–230 (KVHINIVVIG…DNINEPKRPS (226 aa)) constitute a tr-type G domain. The interval 14–21 (GHVDSGKS) is G1. 14 to 21 (GHVDSGKS) is a GTP binding site. K55 carries the N6,N6-dimethyllysine modification. Residues 70–74 (GITID) are G2. Residue K79 is modified to N6,N6,N6-trimethyllysine. The tract at residues 91-94 (DAPG) is G3. GTP is bound by residues 91-95 (DAPGH) and 153-156 (NKMD). A G4 region spans residues 153–156 (NKMD). An N6,N6,N6-trimethyllysine modification is found at K187. The interval 194–196 (SGF) is G5. K261 carries the post-translational modification N6-methyllysine. 5-glutamyl glycerylphosphorylethanolamine is present on E289. K306 carries the N6,N6,N6-trimethyllysine modification. 5-glutamyl glycerylphosphorylethanolamine is present on E362. Position 396 is an N6,N6,N6-trimethyllysine (K396).

This sequence belongs to the TRAFAC class translation factor GTPase superfamily. Classic translation factor GTPase family. EF-Tu/EF-1A subfamily.

The protein localises to the cytoplasm. In terms of biological role, this protein promotes the GTP-dependent binding of aminoacyl-tRNA to the A-site of ribosomes during protein biosynthesis. This chain is Elongation factor 1-alpha, found in Pisum sativum (Garden pea).